A 272-amino-acid chain; its full sequence is Putative phosphoenolpyruvate synthase regulatory protein (272 aa).

152–159 (GVSRCGKT) contributes to the ADP binding site.

It belongs to the pyruvate, phosphate/water dikinase regulatory protein family. PSRP subfamily.

It carries out the reaction [pyruvate, water dikinase] + ADP = [pyruvate, water dikinase]-phosphate + AMP + H(+). The catalysed reaction is [pyruvate, water dikinase]-phosphate + phosphate + H(+) = [pyruvate, water dikinase] + diphosphate. In terms of biological role, bifunctional serine/threonine kinase and phosphorylase involved in the regulation of the phosphoenolpyruvate synthase (PEPS) by catalyzing its phosphorylation/dephosphorylation. The polypeptide is Putative phosphoenolpyruvate synthase regulatory protein (Ectopseudomonas mendocina (strain ymp) (Pseudomonas mendocina)).